We begin with the raw amino-acid sequence, 924 residues long: DNA repair and recombination protein RDH54 (924 aa).

The span at 1 to 10 (MQIPKYENKP) shows a compositional bias: basic and acidic residues. Disordered stretches follow at residues 1–21 (MQIP…GSNK) and 155–183 (EALS…NDGG). Residues 168 to 178 (TTSTTETVPST) show a composition bias toward low complexity. The 189-residue stretch at 299 to 487 (LENDSDISGC…FTIIDFINPG (189 aa)) folds into the Helicase ATP-binding domain. 346–353 (IPLTGLCK) is an ATP binding site. A DEGH box motif is present at residues 472–475 (NDLN). A Glycyl lysine isopeptide (Lys-Gly) (interchain with G-Cter in ubiquitin) cross-link involves residue Lys615. One can recognise a Helicase C-terminal domain in the interval 631–790 (KLRVLMTLLE…DSEMRNKESS (160 aa)).

The protein belongs to the SNF2/RAD54 helicase family. As to quaternary structure, interacts with RAD51 and DMC1.

Its subcellular location is the nucleus. The enzyme catalyses ATP + H2O = ADP + phosphate + H(+). Its function is as follows. Involved in the recombinational repair of double-strand breaks (DSB) in DNA during mitosis and meiosis. Has DNA dependent ATPase activity. Promotes D-loop (displacement loop) formation with RAD51 recombinase. Modifies the topology of double-stranded DNA during the D-loop reaction to facilitate the invasion of the homologous duplex molecule by the initiating single-stranded DNA substrate. Required for adaptation from G2/M checkpoint arrest induced by a double strand break, by participating in monitoring the extent of single-stranded DNA produced by resection of DNA ends. This role is distinct from its roles in recombination. Promotes colocalization of RAD51 and DMC1 during meiotic recombination. Involved in crossover interference. This chain is DNA repair and recombination protein RDH54 (RDH54), found in Saccharomyces cerevisiae (strain RM11-1a) (Baker's yeast).